A 107-amino-acid chain; its full sequence is Thioredoxin-1 (107 aa).

The 105-residue stretch at 2–106 (ASVRTMTDFH…LTNMMAKLVK (105 aa)) folds into the Thioredoxin domain. Catalysis depends on nucleophile residues C31 and C34. A disulfide bridge connects residues C31 and C34.

The protein belongs to the thioredoxin family.

Its subcellular location is the nucleus. Participates in various redox reactions through the reversible oxidation of its active center dithiol to a disulfide and catalyzes dithiol-disulfide exchange reactions. As a reducing substrate of peroxiredoxin 1, thioredoxin 2 is preferred over thioredoxin 1. Required for female meiosis and early embryonic development. The polypeptide is Thioredoxin-1 (dhd) (Drosophila yakuba (Fruit fly)).